Here is a 110-residue protein sequence, read N- to C-terminus: Iron-sulfur cluster assembly protein CyaY (110 aa).

Belongs to the frataxin family.

Involved in iron-sulfur (Fe-S) cluster assembly. May act as a regulator of Fe-S biogenesis. This Pseudomonas putida (strain ATCC 700007 / DSM 6899 / JCM 31910 / BCRC 17059 / LMG 24140 / F1) protein is Iron-sulfur cluster assembly protein CyaY.